We begin with the raw amino-acid sequence, 33 residues long: Brevinin-2CDYb (33 aa).

A disulfide bridge links C27 with C33.

This sequence belongs to the frog skin active peptide (FSAP) family. Brevinin subfamily. In terms of tissue distribution, expressed by the skin glands.

The protein resides in the secreted. In terms of biological role, antimicrobial peptide. The sequence is that of Brevinin-2CDYb from Rana dybowskii (Dybovsky's frog).